The following is a 706-amino-acid chain: MNENKPGDSQNLACVFCRKNDDCPNKYGEKKTKEKWNLTVHYYCLLMSSGIWQRGKEEEGVYGFLIEDIRKEVNRASKLKCCVCKKNGASIGCVAPRCKRSYHFPCGLQRECIFQFTGNFASFCWNHRPVQIITSNNYRESLPCTICLEFIEPIPSYNILRSPCCKNAWFHRDCLQVQAINAGVFFFRCTICSNSDIFQKEMLRMGIHIPEKDASWELEENAYQELLQHHERCDVRRCRCKEGRDYNAPDSKWEIKRCQCCGSSGTHLACSSLRSWEQNWECLECRGIIYNSGEFQKAKKHVLPNSNNVGITDCLLEESSPKLPRQSPGSQSKDLLRQGSKFRRNVSTLLIELGFQIKKKTKRLYINKANIWTSALDAFRNRNFNPSYAIEVAYVIENDNFGSEHPGSKQEFLSLLMQHLENSSLFEGSLSKNLSLNSQALKENLYYEAGKMLAISLVHGGPSPGFFSKTLFNCLVYGPENTQPILDDVSDFDVAQIIIRINTATTVADLKSVINECYNYLELIGCLRLITTLSDKYMLVKDILVYHVIQRVQAPFESFKQGLKTLGVLEKIQAYPEAFCSILCHKPESLSAKILSDLFTVHTLPDVKALGFWNSYLQAVEDGKSTTTMEDILIFATGCSSIPPAGFKPTPSIECLPVDFPVGNKCNNCLAIPVTNTYKEFQENMDFTIRNTLKLEKEESSHYIGH.

The segment at 11-51 adopts a C2HC pre-PHD-type zinc-finger fold; that stretch reads NLACVFCRKNDDCPNKYGEKKTKEKWNLTVHYYCLLMSSGI. A PHD-type 1 zinc finger spans residues 79–128; that stretch reads LKCCVCKKNGASIGCVAPRCKRSYHFPCGLQRECIFQFTGNFASFCWNHR. A PHD-type 2; degenerate zinc finger spans residues 143 to 193; that stretch reads PCTICLEFIEPIPSYNILRSPCCKNAWFHRDCLQVQAINAGVFFFRCTICS. The segment at 237 to 286 adopts a PHD-type 3 zinc-finger fold; the sequence is RCRCKEGRDYNAPDSKWEIKRCQCCGSSGTHLACSSLRSWEQNWECLECR. Residues 371-698 enclose the HECT domain; sequence IWTSALDAFR…IRNTLKLEKE (328 aa).

The protein localises to the nucleus. It localises to the nucleolus. It is found in the cytoplasm. The catalysed reaction is S-ubiquitinyl-[E2 ubiquitin-conjugating enzyme]-L-cysteine + [acceptor protein]-L-lysine = [E2 ubiquitin-conjugating enzyme]-L-cysteine + N(6)-ubiquitinyl-[acceptor protein]-L-lysine.. It functions in the pathway protein modification; protein ubiquitination. In terms of biological role, E3 ubiquitin-protein ligase which accepts ubiquitin from an E2 ubiquitin-conjugating enzyme in the form of a thioester and then directly transfers the ubiquitin to targeted substrates. Essential in early embryonic development to prevent apoptotic death. The protein is G2/M phase-specific E3 ubiquitin-protein ligase (G2E3) of Macaca fascicularis (Crab-eating macaque).